Reading from the N-terminus, the 230-residue chain is Acyl-protein thioesterase 1 (230 aa).

Catalysis depends on charge relay system residues S119, D174, and H208. The residue at position 224 (K224) is an N6-acetyllysine.

Belongs to the AB hydrolase superfamily. AB hydrolase 2 family. In terms of assembly, homodimer.

Its subcellular location is the cytoplasm. It is found in the cell membrane. It localises to the nucleus membrane. The protein resides in the endoplasmic reticulum. It catalyses the reaction S-hexadecanoyl-L-cysteinyl-[protein] + H2O = L-cysteinyl-[protein] + hexadecanoate + H(+). The catalysed reaction is 1-hexadecanoyl-sn-glycero-3-phosphocholine + H2O = sn-glycerol 3-phosphocholine + hexadecanoate + H(+). The enzyme catalyses a 1-(9Z-octadecenoyl)-2-acyl-sn-glycero-3-phosphocholine + H2O = a 2-acyl-sn-glycero-3-phosphocholine + (9Z)-octadecenoate + H(+). Functionally, acts as an acyl-protein thioesterase. Hydrolyzes fatty acids from S-acylated cysteine residues in proteins such as trimeric G alpha proteins or HRAS. Acts as a palmitoyl thioesterase that catalyzes depalmitoylation of proteins, such as ADRB2, KCNMA1 and SQSTM1. Acts as a negative regulator of autophagy by mediating palmitoylation of SQSTM1, decreasing affinity between SQSTM1 and ATG8 proteins and recruitment of ubiquitinated cargo proteins to autophagosomes. Acts as a lysophospholipase and hydrolyzes lysophosphatidylcholine (lyso-PC). Also hydrolyzes lysophosphatidylethanolamine (lyso-PE), lysophosphatidylinositol (lyso-PI) and lysophosphatidylserine (lyso-PS). Has much higher thioesterase activity than lysophospholipase activity. Contributes to the production of lysophosphatidic acid (LPA) during blood coagulation by recognizing and cleaving plasma phospholipids to generate lysophospholipids which in turn act as substrates for ENPP2 to produce LPA. The protein is Acyl-protein thioesterase 1 (Lypla1) of Mus musculus (Mouse).